The following is a 277-amino-acid chain: Uracil phosphoribosyltransferase homolog (277 aa).

The disordered stretch occupies residues 1 to 69 (MEAMPCHNQR…AAAPSPAAED (69 aa)). Low complexity predominate over residues 37-69 (AEPSEGSSSGSPSPDSSSGSNGAAAAPSPAAED). Residues R101, R110, and 144–147 (EKGN) each bind GTP. R154 provides a ligand contact to 5-phospho-alpha-D-ribose 1-diphosphate. R171 and R200 together coordinate GTP. Position 206–214 (206–214 (YPILSTGNT)) interacts with 5-phospho-alpha-D-ribose 1-diphosphate. 267–269 (THF) provides a ligand contact to uracil.

It belongs to the UPRTase family.

Its subcellular location is the cytoplasm. The protein localises to the nucleus. The chain is Uracil phosphoribosyltransferase homolog (UPRT) from Gallus gallus (Chicken).